Here is a 274-residue protein sequence, read N- to C-terminus: Orotidine 5'-phosphate decarboxylase (274 aa).

Lys95 serves as the catalytic Proton donor.

This sequence belongs to the OMP decarboxylase family. Type 2 subfamily.

It catalyses the reaction orotidine 5'-phosphate + H(+) = UMP + CO2. Its pathway is pyrimidine metabolism; UMP biosynthesis via de novo pathway; UMP from orotate: step 2/2. The protein is Orotidine 5'-phosphate decarboxylase of Mycolicibacterium paratuberculosis (strain ATCC BAA-968 / K-10) (Mycobacterium paratuberculosis).